We begin with the raw amino-acid sequence, 289 residues long: Probable ABC transporter permease protein BRA0749/BS1330_II0742 (289 aa).

6 helical membrane-spanning segments follow: residues 9–29, 70–90, 99–119, 144–166, 213–233, and 260–280; these read FLIL…VVHL, VWTV…AIIL, VARV…AIVW, IQWL…LVTV, IAIV…WVMT, and EASA…VIYI. The region spanning 65-279 is the ABC transmembrane type-1 domain; that stretch reads LWRTAVWTVA…AILLVFTVIY (215 aa).

This sequence belongs to the binding-protein-dependent transport system permease family. In terms of assembly, the complex is composed of two ATP-binding proteins (BRA0745), two transmembrane proteins (BRA0749) and a solute-binding protein (BRA0748).

Its subcellular location is the cell inner membrane. Functionally, probably part of an ABC transporter complex. Probably responsible for the translocation of the substrate across the membrane. The chain is Probable ABC transporter permease protein BRA0749/BS1330_II0742 from Brucella suis biovar 1 (strain 1330).